The following is a 309-amino-acid chain: GTPase Era (309 aa).

An Era-type G domain is found at 16–186 (HAGFVAIVGK…REQILDALPE (171 aa)). Positions 24–31 (GKPNVGKS) are G1. 24-31 (GKPNVGKS) contributes to the GTP binding site. Residues 50-54 (QTTRR) form a G2 region. The G3 stretch occupies residues 71–74 (DTPG). Residues 71-75 (DTPGL) and 133-136 (NKVD) each bind GTP. Positions 133–136 (NKVD) are G4. The tract at residues 164–166 (LSA) is G5. Positions 217–294 (LREELPYAVA…FLGLEVIVIP (78 aa)) constitute a KH type-2 domain.

It belongs to the TRAFAC class TrmE-Era-EngA-EngB-Septin-like GTPase superfamily. Era GTPase family. As to quaternary structure, monomer.

Its subcellular location is the cytoplasm. It localises to the cell membrane. In terms of biological role, an essential GTPase that binds both GDP and GTP, with rapid nucleotide exchange. Plays a role in 16S rRNA processing and 30S ribosomal subunit biogenesis and possibly also in cell cycle regulation and energy metabolism. This Deinococcus geothermalis (strain DSM 11300 / CIP 105573 / AG-3a) protein is GTPase Era.